Consider the following 2216-residue polypeptide: Protein Ycf2 (2216 aa).

1567-1574 (GSIGTGRS) is an ATP binding site.

Belongs to the Ycf2 family.

Its subcellular location is the plastid stroma. In terms of biological role, probable ATPase of unknown function. Its presence in a non-photosynthetic plant (Epifagus virginiana) and experiments in tobacco indicate that it has an essential function which is probably not related to photosynthesis. This Epifagus virginiana (Beechdrops) protein is Protein Ycf2.